Reading from the N-terminus, the 156-residue chain is Probable cyclic pyranopterin monophosphate synthase (156 aa).

Substrate is bound by residues 73–75 (MCH) and 109–110 (ME). The active site involves aspartate 124.

Belongs to the MoaC family. As to quaternary structure, homohexamer; trimer of dimers.

The catalysed reaction is (8S)-3',8-cyclo-7,8-dihydroguanosine 5'-triphosphate = cyclic pyranopterin phosphate + diphosphate. The protein operates within cofactor biosynthesis; molybdopterin biosynthesis. Functionally, catalyzes the conversion of (8S)-3',8-cyclo-7,8-dihydroguanosine 5'-triphosphate to cyclic pyranopterin monophosphate (cPMP). In Archaeoglobus fulgidus (strain ATCC 49558 / DSM 4304 / JCM 9628 / NBRC 100126 / VC-16), this protein is Probable cyclic pyranopterin monophosphate synthase.